A 745-amino-acid polypeptide reads, in one-letter code: Elongation factor G, mitochondrial (745 aa).

The N-terminal 15 residues, 1-15, are a transit peptide targeting the mitochondrion; that stretch reads MSLITRLLTASSPLR. Residues 40–317 enclose the tr-type G domain; the sequence is DKIRNIGISA…AVLEYLPNPG (278 aa). Residues 49-56, 116-120, and 170-173 contribute to the GTP site; these read AHIDSGKT, DTPGH, and NKLD.

Belongs to the TRAFAC class translation factor GTPase superfamily. Classic translation factor GTPase family. EF-G/EF-2 subfamily.

The protein resides in the mitochondrion. It functions in the pathway protein biosynthesis; polypeptide chain elongation. Its function is as follows. Mitochondrial GTPase that catalyzes the GTP-dependent ribosomal translocation step during translation elongation. During this step, the ribosome changes from the pre-translocational (PRE) to the post-translocational (POST) state as the newly formed A-site-bound peptidyl-tRNA and P-site-bound deacylated tRNA move to the P and E sites, respectively. Catalyzes the coordinated movement of the two tRNA molecules, the mRNA and conformational changes in the ribosome. Essential during development as it acts as a retrograde signal from mitochondria to the nucleus to slow down cell proliferation if mitochondrial energy output is low. The protein is Elongation factor G, mitochondrial (ico) of Drosophila ananassae (Fruit fly).